Consider the following 298-residue polypeptide: Tyrosine recombinase XerC (298 aa).

In terms of domain architecture, Core-binding (CB) spans 2–88 (TDLHTDVERY…ALRSFFDWLV (87 aa)). Positions 109–288 (HLPKNIDVDD…DFQHLASVYD (180 aa)) constitute a Tyr recombinase domain. Catalysis depends on residues Arg-148, Lys-172, His-240, Arg-243, and His-266. The O-(3'-phospho-DNA)-tyrosine intermediate role is filled by Tyr-275.

The protein belongs to the 'phage' integrase family. XerC subfamily. Forms a cyclic heterotetrameric complex composed of two molecules of XerC and two molecules of XerD, in which XerC interacts with XerD via its C-terminal region, XerD interacts with XerC via its C-terminal region and so on.

The protein localises to the cytoplasm. FtsK may regulate the catalytic switch between XerC and XerD in the heterotetrameric complex during the two steps of the recombination process. Site-specific tyrosine recombinase, which acts by catalyzing the cutting and rejoining of the recombining DNA molecules. Binds cooperatively to specific DNA consensus sequences that are separated from XerD binding sites by a short central region, forming the heterotetrameric XerC-XerD complex that recombines DNA substrates. The complex is essential to convert dimers of the bacterial chromosome into monomers to permit their segregation at cell division. It also contributes to the segregational stability of plasmids. In the complex XerC specifically exchanges the top DNA strands. The protein is Tyrosine recombinase XerC of Escherichia coli (strain 55989 / EAEC).